A 230-amino-acid polypeptide reads, in one-letter code: Ribonuclease 3 (230 aa).

An RNase III domain is found at 5 to 125 (YSRLYKILGY…IIGAIYLDSD (121 aa)). Glu40 contributes to the Mg(2+) binding site. Residue Asp44 is part of the active site. Mg(2+) contacts are provided by Asp111 and Glu114. Glu114 is a catalytic residue. The DRBM domain maps to 153-223 (DSKSKLQEIL…AEKMIQILSQ (71 aa)).

The protein belongs to the ribonuclease III family. In terms of assembly, homodimer. It depends on Mg(2+) as a cofactor.

It is found in the cytoplasm. The catalysed reaction is Endonucleolytic cleavage to 5'-phosphomonoester.. In terms of biological role, digests double-stranded RNA. Involved in the processing of primary rRNA transcript to yield the immediate precursors to the large and small rRNAs (23S and 16S). Processes some mRNAs, and tRNAs when they are encoded in the rRNA operon. Processes pre-crRNA and tracrRNA of type II CRISPR loci if present in the organism. This is Ribonuclease 3 from Francisella philomiragia subsp. philomiragia (strain ATCC 25017 / CCUG 19701 / FSC 153 / O#319-036).